We begin with the raw amino-acid sequence, 196 residues long: RNA-binding protein with multiple splicing 2 (196 aa).

An RRM domain is found at 20–97 (RTLFVSGLPI…QTLRLEFAKA (78 aa)). The tract at residues 30-40 (DIKPRELYLLF) is important for homodimerization.

In terms of assembly, homodimer. In terms of tissue distribution, expressed in developing heart, pronephros, retina and epiphysis. In adult, high expression in heart, moderate in kidney, undetectable in liver, lung and skeletal muscle.

It localises to the cytoplasm. Its subcellular location is the nucleus. It is found in the stress granule. In terms of biological role, RNA-binding protein involved in the regulation of smooth muscle cell differentiation and proliferation in the gastrointestinal system. Binds NOG mRNA, the major inhibitor of the bone morphogenetic protein (BMP) pathway. Mediates an increase of NOG mRNA levels, thereby contributing to the negative regulation of BMP signaling pathway and promoting reversible dedifferentiation and proliferation of smooth muscle cells. Acts as a pre-mRNA alternative splicing regulator. Mediates ACTN1 and FLNB alternative splicing. Likely binds to mRNA tandem CAC trinucleotide or CA dinucleotide motifs. This Xenopus laevis (African clawed frog) protein is RNA-binding protein with multiple splicing 2.